The chain runs to 470 residues: Nuclear receptor subfamily 0 group B member 1 (470 aa).

3 tandem repeats follow at residues 1–67 (MAGE…YRCC), 68–133 (FCGK…YRCC), and 134–200 (FCGE…YRCC). A 4 X 67 AA tandem repeats region spans residues 1–253 (MAGEDHQWQG…RPVALKNPQV (253 aa)). 3 short sequence motifs (LXXLL motif) span residues 13-17 (LYNML), 80-84 (LYSML), and 146-150 (LYSLL). The 4; truncated repeat unit spans residues 201 to 253 (FCGEDQPQQGSTLYSMPTSTNQTPAAPEERPGAPWWDTSCGALRPVALKNPQV). Residues 205–469 (DQPQQGSTLY…DMMLEMLCTK (265 aa)) form the NR LBD domain. The AF-2 motif motif lies at 461 to 466 (MMLEML).

It belongs to the nuclear hormone receptor family. NR0 subfamily. Homodimer. Interacts with NR5A1, NR5A2, NR0B2 and with COPS2. Interacts with ESRRB; represses ESRRB activity at the GATA6 promoter.

The protein localises to the nucleus. It localises to the cytoplasm. Nuclear receptor that lacks a DNA-binding domain and acts as a corepressor that inhibits the transcriptional activity of other nuclear receptors through heterodimeric interactions. Component of a cascade required for the development of the hypothalamic-pituitary-adrenal-gonadal axis. May also have a role in the development of the embryo and in the maintenance of embryonic stem cell pluripotency. In Callithrix jacchus (White-tufted-ear marmoset), this protein is Nuclear receptor subfamily 0 group B member 1 (NR0B1).